A 284-amino-acid chain; its full sequence is 2-dehydro-3-deoxyphosphooctonate aldolase (284 aa).

The protein belongs to the KdsA family.

Its subcellular location is the cytoplasm. The enzyme catalyses D-arabinose 5-phosphate + phosphoenolpyruvate + H2O = 3-deoxy-alpha-D-manno-2-octulosonate-8-phosphate + phosphate. It participates in carbohydrate biosynthesis; 3-deoxy-D-manno-octulosonate biosynthesis; 3-deoxy-D-manno-octulosonate from D-ribulose 5-phosphate: step 2/3. It functions in the pathway bacterial outer membrane biogenesis; lipopolysaccharide biosynthesis. The protein is 2-dehydro-3-deoxyphosphooctonate aldolase of Photorhabdus laumondii subsp. laumondii (strain DSM 15139 / CIP 105565 / TT01) (Photorhabdus luminescens subsp. laumondii).